The chain runs to 249 residues: Octanoyltransferase (249 aa).

A BPL/LPL catalytic domain is found at 53 to 234 (PDTDDEIWVV…RLIAHLDGAT (182 aa)). Residues 93–100 (RGGQITYH), 165–167 (ALG), and 178–180 (GLS) contribute to the substrate site. The active-site Acyl-thioester intermediate is the Cys-196.

The protein belongs to the LipB family.

It is found in the cytoplasm. It catalyses the reaction octanoyl-[ACP] + L-lysyl-[protein] = N(6)-octanoyl-L-lysyl-[protein] + holo-[ACP] + H(+). It functions in the pathway protein modification; protein lipoylation via endogenous pathway; protein N(6)-(lipoyl)lysine from octanoyl-[acyl-carrier-protein]: step 1/2. In terms of biological role, catalyzes the transfer of endogenously produced octanoic acid from octanoyl-acyl-carrier-protein onto the lipoyl domains of lipoate-dependent enzymes. Lipoyl-ACP can also act as a substrate although octanoyl-ACP is likely to be the physiological substrate. This is Octanoyltransferase from Burkholderia mallei (strain NCTC 10247).